Reading from the N-terminus, the 590-residue chain is Aspartate--tRNA ligase (590 aa).

L-aspartate is bound at residue glutamate 174. Residues 198 to 201 form an aspartate region; the sequence is QLMK. Residue arginine 220 coordinates L-aspartate. Residues 220–222 and glutamine 229 contribute to the ATP site; that span reads RDE. Histidine 443 lines the L-aspartate pocket. Glutamate 484 lines the ATP pocket. Arginine 491 contacts L-aspartate. 536–539 contacts ATP; it reads GLDR.

It belongs to the class-II aminoacyl-tRNA synthetase family. Type 1 subfamily. Homodimer.

It localises to the cytoplasm. It catalyses the reaction tRNA(Asp) + L-aspartate + ATP = L-aspartyl-tRNA(Asp) + AMP + diphosphate. Its function is as follows. Catalyzes the attachment of L-aspartate to tRNA(Asp) in a two-step reaction: L-aspartate is first activated by ATP to form Asp-AMP and then transferred to the acceptor end of tRNA(Asp). This chain is Aspartate--tRNA ligase, found in Lactococcus lactis subsp. cremoris (strain MG1363).